We begin with the raw amino-acid sequence, 115 residues long: Pancreatic progenitor cell differentiation and proliferation factor B (115 aa).

The disordered stretch occupies residues 21 to 48; the sequence is IGSTSSSSSCGSSEYSGEVIPHHPGLPK. Residues 22-37 are compositionally biased toward low complexity; the sequence is GSTSSSSSCGSSEYSG.

This sequence belongs to the PPDPF family.

Functionally, probable regulator of exocrine pancreas development. The polypeptide is Pancreatic progenitor cell differentiation and proliferation factor B (ppdpfb) (Danio rerio (Zebrafish)).